A 236-amino-acid polypeptide reads, in one-letter code: 7-cyano-7-deazaguanine synthase (236 aa).

12 to 22 contributes to the ATP binding site; it reads FSGGQDSTTCL. Positions 200, 215, 218, and 221 each coordinate Zn(2+).

The protein belongs to the QueC family. Zn(2+) serves as cofactor.

It catalyses the reaction 7-carboxy-7-deazaguanine + NH4(+) + ATP = 7-cyano-7-deazaguanine + ADP + phosphate + H2O + H(+). The protein operates within purine metabolism; 7-cyano-7-deazaguanine biosynthesis. Its function is as follows. Catalyzes the ATP-dependent conversion of 7-carboxy-7-deazaguanine (CDG) to 7-cyano-7-deazaguanine (preQ(0)). In Bradyrhizobium sp. (strain ORS 278), this protein is 7-cyano-7-deazaguanine synthase.